The chain runs to 286 residues: KH domain-containing protein At2g38610 (286 aa).

Position 2 is an N-acetylserine (Ser2). Residues 141–208 form the KH domain; it reads EIPVDNYPNF…EHLNEQLHIL (68 aa). Positions 256-286 are disordered; that stretch reads SNNLREESPGPSGGGSVSPFNSSGKRPKTGC. A phosphoserine mark is found at Ser263 and Ser273.

Its subcellular location is the nucleus. In Arabidopsis thaliana (Mouse-ear cress), this protein is KH domain-containing protein At2g38610.